A 351-amino-acid polypeptide reads, in one-letter code: MPGAAAKGSELSERIESFVEALKRGGGRRSSEDMARETLGLLRRIITDHRWSNAGELMELIRREGRRMTAAQPSETTVGNMVRRVLRIIREEYGRLHGRSDESDQQESLHKLLTSGGLSEDFRSHYAQLQSNIIEAINELLVELEGTTENIAAQALEHIHSNEVIMTIGFSRTVEAFLREAARKRKFHVIVAECAPFCQGHEMAVNLSKAGIETTVMTDAAIFAVMSRVNKVIIGTKTILANGALRAVAGTHTLALAAKHHSTPLIVCAPMFKLSPQFPNEEDSFHKFVAPEEVLPFTEGDILEKVSVHCPVFDYVPPELITLFISNIGGNAPSYIYRLMSELYHPDDHVL.

It belongs to the eIF-2B alpha/beta/delta subunits family. As to quaternary structure, component of the translation initiation factor 2B (eIF2B) complex which is a heterodecamer of two sets of five different subunits: alpha, beta, gamma, delta and epsilon. Subunits alpha, beta and delta comprise a regulatory subcomplex and subunits epsilon and gamma comprise a catalytic subcomplex. Within the complex, the hexameric regulatory complex resides at the center, with the two heterodimeric catalytic subcomplexes bound on opposite sides.

Its subcellular location is the cytoplasm. The protein localises to the cytosol. With respect to regulation, activated by the chemical integrated stress response (ISR) inhibitor ISRIB which stimulates guanine nucleotide exchange factor activity for both phosphorylated and unphosphorylated eIF2. Acts as a component of the translation initiation factor 2B (eIF2B) complex, which catalyzes the exchange of GDP for GTP on eukaryotic initiation factor 2 (eIF2) gamma subunit. Its guanine nucleotide exchange factor activity is repressed when bound to eIF2 complex phosphorylated on the alpha subunit, thereby limiting the amount of methionyl-initiator methionine tRNA available to the ribosome and consequently global translation is repressed. This is Translation initiation factor eIF2B subunit beta (EIF2B2) from Bos taurus (Bovine).